Here is a 393-residue protein sequence, read N- to C-terminus: Beta-ureidopropionase (393 aa).

In terms of domain architecture, CN hydrolase spans 72–344; it reads VRVGLVQNRI…DGLLVTELNL (273 aa). The active-site Proton acceptor is the E119. K196 (proton donor) is an active-site residue. Catalysis depends on C233, which acts as the Nucleophile. S378 bears the Phosphoserine mark.

It belongs to the carbon-nitrogen hydrolase superfamily. BUP family. Homodimer, homotetramer, homooctamer; can also form higher homooligomers.

The protein resides in the cytoplasm. It carries out the reaction 3-(carbamoylamino)propanoate + H2O + 2 H(+) = beta-alanine + NH4(+) + CO2. The enzyme catalyses 3-(carbamoylamino)-2-methylpropanoate + H2O + 2 H(+) = (R)-3-amino-2-methylpropanoate + NH4(+) + CO2. It participates in amino-acid biosynthesis; beta-alanine biosynthesis. Functionally, catalyzes a late step in pyrimidine degradation. Converts N-carbamoyl-beta-alanine (3-ureidopropanoate) into beta-alanine, ammonia and carbon dioxide. Likewise, converts N-carbamoyl-beta-aminoisobutyrate (3-ureidoisobutyrate) into beta-aminoisobutyrate, ammonia and carbon dioxide. This Mus musculus (Mouse) protein is Beta-ureidopropionase (Upb1).